The following is a 215-amino-acid chain: Cytochrome b6 (215 aa).

Residues 32–52 (IFYCLGGITLTCFLVQVATGF) traverse the membrane as a helical segment. Cys35 is a heme c binding site. Residues His86 and His100 each contribute to the heme b site. The next 3 helical transmembrane spans lie at 90–110 (ASMMVLMMILHVFRVYLTGGF), 116–136 (LTWVTGVVLAVLTASFGVTGY), and 186–206 (LHTFVLPLLTAVFMLMHFLMI). The heme b site is built by His187 and His202.

This sequence belongs to the cytochrome b family. PetB subfamily. The 4 large subunits of the cytochrome b6-f complex are cytochrome b6, subunit IV (17 kDa polypeptide, PetD), cytochrome f and the Rieske protein, while the 4 small subunits are PetG, PetL, PetM and PetN. The complex functions as a dimer. Heme b serves as cofactor. It depends on heme c as a cofactor.

The protein resides in the plastid. It localises to the chloroplast thylakoid membrane. Component of the cytochrome b6-f complex, which mediates electron transfer between photosystem II (PSII) and photosystem I (PSI), cyclic electron flow around PSI, and state transitions. This is Cytochrome b6 from Hordeum vulgare (Barley).